Reading from the N-terminus, the 884-residue chain is Alanine--tRNA ligase (884 aa).

Zn(2+)-binding residues include H565, H569, C674, and H678.

The protein belongs to the class-II aminoacyl-tRNA synthetase family. It depends on Zn(2+) as a cofactor.

Its subcellular location is the cytoplasm. The catalysed reaction is tRNA(Ala) + L-alanine + ATP = L-alanyl-tRNA(Ala) + AMP + diphosphate. Catalyzes the attachment of alanine to tRNA(Ala) in a two-step reaction: alanine is first activated by ATP to form Ala-AMP and then transferred to the acceptor end of tRNA(Ala). Also edits incorrectly charged Ser-tRNA(Ala) and Gly-tRNA(Ala) via its editing domain. The chain is Alanine--tRNA ligase from Xanthobacter autotrophicus (strain ATCC BAA-1158 / Py2).